A 367-amino-acid polypeptide reads, in one-letter code: Putative threonine-phosphate decarboxylase (367 aa).

Residues 12-13 (HG), Asn-29, and Asn-152 each bind O-phospho-L-threonine. An N6-(pyridoxal phosphate)lysine modification is found at Lys-213. Arg-320 and Arg-334 together coordinate O-phospho-L-threonine.

Belongs to the class-II pyridoxal-phosphate-dependent aminotransferase family. It depends on pyridoxal 5'-phosphate as a cofactor.

It catalyses the reaction O-phospho-L-threonine + H(+) = (R)-1-aminopropan-2-yl phosphate + CO2. It functions in the pathway cofactor biosynthesis; adenosylcobalamin biosynthesis. Decarboxylates L-threonine-O-3-phosphate to yield (R)-1-amino-2-propanol O-2-phosphate, the precursor for the linkage between the nucleotide loop and the corrin ring in cobalamin. The sequence is that of Putative threonine-phosphate decarboxylase (cobD) from Caldanaerobacter subterraneus subsp. tengcongensis (strain DSM 15242 / JCM 11007 / NBRC 100824 / MB4) (Thermoanaerobacter tengcongensis).